The chain runs to 389 residues: Na(+)/H(+) antiporter NhaA (389 aa).

11 helical membrane-spanning segments follow: residues 17 to 37, 59 to 79, 95 to 115, 124 to 144, 154 to 174, 177 to 197, 213 to 233, 261 to 281, 287 to 307, 328 to 348, and 363 to 383; these read ILLLVAVALAMLMANSPLAGL, LLLWINDGLMALFFLLIGLEV, SLPTFAAIGGMLVPAGIYLLF, AGWAIPAATDIAFALGIMALL, VFLLALAIIDDLGVIVIIALF, TDLSTISLIIASIAIVGLVAL, LVLWVAVLKSGVHATLAGVII, FLILPVFAFANAGVALGNMSL, PVPVGIALGLMLGKPIGVMLF, IAPVAAMCGIGFTMSMFIASL, and LGTLIGSILAALIGYFWLSKV.

It belongs to the NhaA Na(+)/H(+) (TC 2.A.33) antiporter family.

The protein resides in the cell inner membrane. The catalysed reaction is Na(+)(in) + 2 H(+)(out) = Na(+)(out) + 2 H(+)(in). Its function is as follows. Na(+)/H(+) antiporter that extrudes sodium in exchange for external protons. The sequence is that of Na(+)/H(+) antiporter NhaA from Shewanella sp. (strain MR-4).